A 692-amino-acid polypeptide reads, in one-letter code: MTREFSLENTRNIGIMAHIDAGKTTATERILYYTGRIHKIGETHEGASQMDWMEQEQERGITITSAATTAQWKGHRVNIIDTPGHVDFTVEVERSLRVLDGAVAVLDAQSGVEPQTETVWRQATTYGVPRIVFVNKMDKIGADFLYSVGTIHDRLQANAHPIQLPIGAEDEFNGIIDLVEECAYMYGNDLGTDIERVEIPEEHKELAEEYRGKLIEAVAELDEEMMMKYLEGEEITVEELKAGIRKATTSVEFFPVICGSAFKNKGVQILLDAVIDYLPSPLDVPAIKGTLPDTDEEVERKSSDEEPFAALAFKIMTDPYVGKLTFFRVYSGVLNSGSYVKNSTKGKRERVGRILQMHANSREEISTVYAGDIAAAVGLKDTTTGDTLCDEKSLVILESMEFPEPVISVAIEPKSKADQDKMGTALSKLSEEDPTFRAHTDQETGQTIIAGMGELHLDIIVDRMRREFKVEANVGAPQVAYRETFRAAAKVEGKFARQSGGRGQFGHVWIEFAPNEEGKGFEFENKIVGGVVPREYIPAVGAGLEDSLKNGVLAGYPLVDIKAALVDGSYHDVDSSEMAFKIAASMALKAAVSKCNPVILEPMMKVEVVIPEEYMGDIMGDVTSRRGRVEGMEARGNAQVVRAMVPLSEMFGYATALRSNTQGRGTFSMTFDHYEEVPKSVSEEIIKKNKGE.

Residues glutamate 8–leucine 282 form the tr-type G domain. GTP is bound by residues alanine 17–threonine 24, aspartate 81–histidine 85, and asparagine 135–aspartate 138.

The protein belongs to the TRAFAC class translation factor GTPase superfamily. Classic translation factor GTPase family. EF-G/EF-2 subfamily.

The protein resides in the cytoplasm. Functionally, catalyzes the GTP-dependent ribosomal translocation step during translation elongation. During this step, the ribosome changes from the pre-translocational (PRE) to the post-translocational (POST) state as the newly formed A-site-bound peptidyl-tRNA and P-site-bound deacylated tRNA move to the P and E sites, respectively. Catalyzes the coordinated movement of the two tRNA molecules, the mRNA and conformational changes in the ribosome. This chain is Elongation factor G, found in Bacillus cereus (strain G9842).